Consider the following 910-residue polypeptide: Staphylococcal nuclease domain-containing protein 1 (910 aa).

A2 bears the N-acetylalanine mark. 3 TNase-like domains span residues 18–166, 193–328, and 341–496; these read TVQR…MWSE, KPVN…IWRD, and KQFV…LHSK. At T103 the chain carries Phosphothreonine. K193 is subject to N6-acetyllysine. A phosphothreonine mark is found at T235 and T240. 2 short sequence motifs (nuclear localization signal) span residues 321–325 and 388–392; these read RRLRI and KKLRP. Residue S426 is modified to Phosphoserine. K513 is covalently cross-linked (Glycyl lysine isopeptide (Lys-Gly) (interchain with G-Cter in SUMO2)). The 136-residue stretch at 525 to 660 folds into the TNase-like 4 domain; the sequence is GRSEAVVEYV…KQRKEKVWAH (136 aa). K641 carries the N6-acetyllysine modification. At S645 the chain carries Phosphoserine. The 59-residue stretch at 729–787 folds into the Tudor domain; sequence APRRGEFCIAKFVDGEWYRARVEKVESPAKVHVFYIDYGNREILPSTRLGTLPPAFSTR. T779 bears the Phosphothreonine mark. Residues S785 and S909 each carry the phosphoserine modification.

Forms a ternary complex with STAT6 and POLR2A. Associates with the RNA-induced silencing complex (RISC). Interacts with the RISC components AGO2, FMR1 and TNRC6A. Interacts with GTF2E1 and GTF2E2. Interacts with PIM1. Interacts with STAT5. Interacts with SYT11 (via C2 2 domain); the interaction with SYT11 is direct. Post-translationally, phosphorylated by PIM1 in vitro.

Its subcellular location is the cytoplasm. It localises to the nucleus. The protein resides in the melanosome. It catalyses the reaction Endonucleolytic cleavage to nucleoside 3'-phosphates and 3'-phosphooligonucleotide end-products.. In terms of biological role, endonuclease that mediates miRNA decay of both protein-free and AGO2-loaded miRNAs. As part of its function in miRNA decay, regulates mRNAs involved in G1-to-S phase transition. Functions as a bridging factor between STAT6 and the basal transcription factor. Plays a role in PIM1 regulation of MYB activity. Functions as a transcriptional coactivator for STAT5. This chain is Staphylococcal nuclease domain-containing protein 1 (Snd1), found in Mus musculus (Mouse).